The chain runs to 187 residues: Inner membrane-spanning protein YciB (187 aa).

Helical transmembrane passes span 25–45 (ATGA…ALYK), 50–70 (MQLI…FLHD), 76–96 (WKVT…HVMG), 118–138 (INWA…YVAY), and 148–168 (FKVF…GGYI).

It belongs to the YciB family.

Its subcellular location is the cell inner membrane. Its function is as follows. Plays a role in cell envelope biogenesis, maintenance of cell envelope integrity and membrane homeostasis. The polypeptide is Inner membrane-spanning protein YciB (Vibrio vulnificus (strain CMCP6)).